The chain runs to 227 residues: DNA repair protein RecO (227 aa).

The protein belongs to the RecO family.

In terms of biological role, involved in DNA repair and RecF pathway recombination. The chain is DNA repair protein RecO from Pseudomonas putida (strain W619).